A 390-amino-acid polypeptide reads, in one-letter code: Zinc transporter 8 (390 aa).

The first 25 residues, 1 to 25 (MRTNTTATVLLAAAVALLLATAARG), serve as a signal peptide directing secretion. An N-linked (GlcNAc...) asparagine glycan is attached at Asn-4. Residues 26–50 (DGGDGGCGKEDAAAGRDRARARGLK) lie on the Extracellular side of the membrane. Residues 51 to 71 (IAAFFSILVCGALGCGLPSLG) form a helical membrane-spanning segment. Over 72 to 82 (RHVPALRPDGD) the chain is Cytoplasmic. Residues 83-103 (VFFLVKAFAAGVILATGFIHI) form a helical membrane-spanning segment. Over 104–124 (LPDAFDNLTDDCLPAGGPWKE) the chain is Extracellular. N-linked (GlcNAc...) asparagine glycosylation is present at Asn-110. The helical transmembrane segment at 125–145 (FPFAGFGAMVGAIGTLVVDTL) threads the bilayer. Residues 146–235 (ATGYFTRALS…DDKETTLRHR (90 aa)) lie on the Cytoplasmic side of the membrane. The disordered stretch occupies residues 165–199 (VADEEKQSAAATQQHNHHHNHHVVGDGGGGGEEHE). Residues 236–256 (VISQVLELGIVVHSVIIGISL) traverse the membrane as a helical segment. At 257-267 (GASQNPETIKP) the chain is on the extracellular side. A helical transmembrane segment spans residues 268–288 (LVVALSFHQMFEGMGLGGCIV). The Cytoplasmic segment spans residues 289–296 (QAKFKVRS). The chain crosses the membrane as a helical span at residues 297–317 (IVTMVLFFCLTTPVGIAVGVG). Residues 318 to 329 (ISSVYNESSPTA) lie on the Extracellular side of the membrane. An N-linked (GlcNAc...) asparagine glycan is attached at Asn-323. Residues 330–350 (LVVEGILNSVAAGILIYMALV) form a helical membrane-spanning segment. Topologically, residues 351-369 (DLLAEDFMNPRVQSKGKLQ) are cytoplasmic. Residues 370-390 (LGINLAMLAGAGLMSMLAKWA) traverse the membrane as a helical segment.

It belongs to the ZIP transporter (TC 2.A.5) family.

The protein resides in the cell membrane. Its function is as follows. Zinc transporter that may mediate zinc uptake from the rhizosphere and may be responsible for the translocation of zinc within the plant. The polypeptide is Zinc transporter 8 (ZIP8) (Oryza sativa subsp. japonica (Rice)).